The following is a 598-amino-acid chain: Nuclear receptor subfamily 4 group A member 2 (598 aa).

Residues 1–22 (MPCVQAQYGSSPQGASPASQSY) form a disordered region. Residues 8–22 (YGSSPQGASPASQSY) show a composition bias toward low complexity. The nuclear receptor DNA-binding region spans 260-335 (EGLCAVCGDN…VGMVKEVVRT (76 aa)). 2 NR C4-type zinc fingers span residues 263 to 283 (CAVC…CEGC) and 299 to 323 (CLAN…FQKC). The Bipartite nuclear localization signal (NLS1) signature appears at 287–314 (FKRTVQKNAKYVCLANKNCPVDKRRRNR). Residues 337–361 (SLKGRRGRLPSKPKSPQDPSPPSPP) are disordered. The Nuclear localization signal (NLS1) motif lies at 338-350 (LKGRRGRLPSKPK). Positions 352-361 (PQDPSPPSPP) are enriched in pro residues. In terms of domain architecture, NR LBD spans 360–595 (PPVSLISALV…AIIDKLFLDT (236 aa)). The nuclear export sequence (NES1) signature appears at 443–452 (FLELFVLRLA). A nuclear export sequence (NES2) motif is present at residues 568 to 577 (QGLQRIFYLK).

This sequence belongs to the nuclear hormone receptor family. NR4 subfamily. Interacts with SFPQ, NCOR2, SIN3A and HADC1. The interaction with NCOR2 increases in the absence of PITX3. Interacts with PER2. Shows a ubiquitous distribution in the cerebral cortex, hippocampus, thalamus, amygdala, and midbrain. Expression increases in prenatally stressed adult offspring in the ventral tegmental area, whereas no changes are observed in the substantia nigra area (at protein level). Not expressed in quiescent liver but is rapidly induced following partial hepatectomy and is specific to hepatic growth as it is not induced in other mitogen-treated cells. Expressed at very low levels in the lung, spleen and stomach and at high levels in the brain.

It is found in the cytoplasm. The protein resides in the nucleus. Transcriptional regulator which is important for the differentiation and maintenance of meso-diencephalic dopaminergic (mdDA) neurons during development. It is crucial for expression of a set of genes such as SLC6A3, SLC18A2, TH and DRD2 which are essential for development of mdDA neurons. May confer liver-specific regulation of delayed-early genes induced later in the G1 phase of regeneration along with NR4A1. The protein is Nuclear receptor subfamily 4 group A member 2 (Nr4a2) of Rattus norvegicus (Rat).